A 693-amino-acid chain; its full sequence is Polyribonucleotide nucleotidyltransferase (693 aa).

2 residues coordinate Mg(2+): D489 and D495. Residues 556–615 form the KH domain; the sequence is PQIHVMNINPAKIKDVVGRGGATVKGIVEKTGAQIDTSDSGEVKVFAKDKKSMDMAVAMI. The S1 motif domain occupies 625 to 693; sequence GQVYKGKIVK…GRVKLSLVAR (69 aa).

It belongs to the polyribonucleotide nucleotidyltransferase family. Component of the RNA degradosome, which is a multiprotein complex involved in RNA processing and mRNA degradation. Mg(2+) serves as cofactor.

It is found in the cytoplasm. The enzyme catalyses RNA(n+1) + phosphate = RNA(n) + a ribonucleoside 5'-diphosphate. Functionally, involved in mRNA degradation. Catalyzes the phosphorolysis of single-stranded polyribonucleotides processively in the 3'- to 5'-direction. The sequence is that of Polyribonucleotide nucleotidyltransferase from Francisella tularensis subsp. holarctica (strain FTNF002-00 / FTA).